We begin with the raw amino-acid sequence, 706 residues long: Polyribonucleotide nucleotidyltransferase (706 aa).

Positions 483 and 489 each coordinate Mg(2+). The region spanning 550 to 609 (PRITTIWVKTDKIRDVIGTGGKNIRNITETTGVTVDIEDTGRINIASTSKEACDLAIQMI) is the KH domain. The 69-residue stretch at 619–687 (GKLYMGIVKK…KNGKVKLSRK (69 aa)) folds into the S1 motif domain.

It belongs to the polyribonucleotide nucleotidyltransferase family. Mg(2+) serves as cofactor.

The protein resides in the cytoplasm. The catalysed reaction is RNA(n+1) + phosphate = RNA(n) + a ribonucleoside 5'-diphosphate. Involved in mRNA degradation. Catalyzes the phosphorolysis of single-stranded polyribonucleotides processively in the 3'- to 5'-direction. This chain is Polyribonucleotide nucleotidyltransferase, found in Pelobacter propionicus (strain DSM 2379 / NBRC 103807 / OttBd1).